We begin with the raw amino-acid sequence, 214 residues long: Probable nicotinate-nucleotide adenylyltransferase (214 aa).

Belongs to the NadD family.

It catalyses the reaction nicotinate beta-D-ribonucleotide + ATP + H(+) = deamido-NAD(+) + diphosphate. The protein operates within cofactor biosynthesis; NAD(+) biosynthesis; deamido-NAD(+) from nicotinate D-ribonucleotide: step 1/1. Its function is as follows. Catalyzes the reversible adenylation of nicotinate mononucleotide (NaMN) to nicotinic acid adenine dinucleotide (NaAD). This is Probable nicotinate-nucleotide adenylyltransferase from Rubrobacter xylanophilus (strain DSM 9941 / JCM 11954 / NBRC 16129 / PRD-1).